The sequence spans 38 residues: Large ribosomal subunit protein bL36 (38 aa).

This sequence belongs to the bacterial ribosomal protein bL36 family.

The protein is Large ribosomal subunit protein bL36 of Roseiflexus sp. (strain RS-1).